A 672-amino-acid polypeptide reads, in one-letter code: Outer dynein arm-docking complex subunit 4 (672 aa).

TPR repeat units lie at residues 13-46 (FPSYMAEGERLYLCGEFSKAAQSFSNALYLQDGD), 48-80 (NCLVARSKCFLKMGDLERSLKDAEASLQSDPAF), 81-114 (CKGILQKAETLYTMGDFEFALVFYHRGYKLRPDR), 275-311 (LKSLEDIDMLLTSGSAEGSLQKAEKVLKKVLEWNKEE), 320-353 (GNLYSCIGNAQIELGQMEAALQSHRKDLEIAKEY), 360-393 (SRALDNIGRVFARVGKFQQAIDTWEEKIPLAKTT), 397-430 (TWLFHEIGRCYLELDQAWQAQNYGEKSQQCAEEE), and 437-470 (LNASVLVAQAQVKLRDFESAVNNFEKALERAKLV). Residues 527-544 (RVRDEPEKVVKQWDHSED) are compositionally biased toward basic and acidic residues. Positions 527 to 672 (RVRDEPEKVV…TGNEMEKEYE (146 aa)) are disordered. The span at 545-555 (EKETDEDDEAF) shows a compositional bias: acidic residues. Basic and acidic residues-rich tracts occupy residues 595–650 (ETGR…EELG) and 658–672 (GETKKTGNEMEKEYE).

As to quaternary structure, component of the outer dynein arm-docking complex along with ODAD1, ODAD2 and ODAD3. Interacts with ODAD1; this interaction may facilitate the recruitment and/or attachment of outer dynein arm docking complex proteins, including ODAD1, ODAD3 and ODAD2, to ciliary axonemes. Interacts with components of the IFT complex A, including IFT140, TTC21B/IFT139 and WDR19/IFT144, and the IFT complex B, including IFT46, IFT52 and IFT57. Interacts with CFAP53. In terms of tissue distribution, expressed in the nasal mucosa (at protein level).

The protein localises to the cytoplasm. It localises to the cytoskeleton. It is found in the cilium axoneme. Component of the outer dynein arm-docking complex (ODA-DC) that mediates outer dynein arms (ODA) binding onto the doublet microtubule. Plays an essential role for the assembly of ODA-DC and for the docking of ODA in ciliary axoneme. The polypeptide is Outer dynein arm-docking complex subunit 4 (Homo sapiens (Human)).